A 252-amino-acid chain; its full sequence is 3-dehydroquinate dehydratase (252 aa).

3-dehydroquinate contacts are provided by residues serine 21, 46-48, and arginine 82; that span reads EWR. The active-site Proton donor/acceptor is the histidine 143. Lysine 170 functions as the Schiff-base intermediate with substrate in the catalytic mechanism. Residues arginine 213, serine 232, and glutamine 236 each contribute to the 3-dehydroquinate site.

Belongs to the type-I 3-dehydroquinase family. As to quaternary structure, homodimer.

The enzyme catalyses 3-dehydroquinate = 3-dehydroshikimate + H2O. It participates in metabolic intermediate biosynthesis; chorismate biosynthesis; chorismate from D-erythrose 4-phosphate and phosphoenolpyruvate: step 3/7. In terms of biological role, involved in the third step of the chorismate pathway, which leads to the biosynthesis of aromatic amino acids. Catalyzes the cis-dehydration of 3-dehydroquinate (DHQ) and introduces the first double bond of the aromatic ring to yield 3-dehydroshikimate. The chain is 3-dehydroquinate dehydratase from Shigella dysenteriae.